Consider the following 189-residue polypeptide: Large ribosomal subunit protein bL9 (189 aa).

It belongs to the bacterial ribosomal protein bL9 family.

In terms of biological role, binds to the 23S rRNA. The sequence is that of Large ribosomal subunit protein bL9 from Methylobacterium nodulans (strain LMG 21967 / CNCM I-2342 / ORS 2060).